A 156-amino-acid chain; its full sequence is MMVLDKEDGVPMLSVQPKGKQKGCAGCNRKIKDRYLLKALDKYWHEDCLKCACCDCRLGEVGSTLYTKANLILCRRDYLRLFGTTGNCAACSKLIPAFEMVMRARDNVYHLDCFACQLCNQRFCVGDKFFLKNNMILCQMDYEEGQLNGTFESQVQ.

LIM zinc-binding domains are found at residues 24 to 83 (CAGC…RLFG) and 88 to 147 (CAAC…EGQL).

In terms of tissue distribution, expressed mainly in the central nervous. Low level of expression in other tissues including thymus.

Its subcellular location is the nucleus. Its function is as follows. May be involved in gene regulation within neural lineage cells potentially by direct DNA binding or by binding to other transcription factors. This chain is Rhombotin-1 (LMO1), found in Homo sapiens (Human).